The primary structure comprises 1481 residues: Cystic fibrosis transmembrane conductance regulator (1481 aa).

Residues 1–77 (MQRSPLEKAS…KLINALRRCF (77 aa)) lie on the Cytoplasmic side of the membrane. The helical transmembrane segment at 78-98 (FWRFMFYGIILYLGEVTKAVQ) threads the bilayer. The ABC transmembrane type-1 1 domain occupies 81 to 365 (FMFYGIILYL…WAVQTWYDSL (285 aa)). Residues 99–122 (PLLLGRIIASYDPDNKVERSIAIY) are Extracellular-facing. Residues 123–146 (LGIGLCLLFIVRTLLLHPAIFGLH) traverse the membrane as a helical segment. Residues 147 to 195 (HIGMQMRIAMFSLIYKKTLKLSSRVLDKISIGQLVSLLSNNLNKFDEGL) lie on the Cytoplasmic side of the membrane. The chain crosses the membrane as a helical span at residues 196 to 216 (ALAHFVWIAPLQVTLLMGLLW). At 217 to 222 (ELLQAF) the chain is on the extracellular side. A helical membrane pass occupies residues 223–243 (TFCGLAFLIVLALLQAGLGKM). Topologically, residues 244 to 298 (MMKYRDQRAGKINERLVITSEMIENIQSVKAYCWEEAMEKIIENLRQTELKLTRK) are cytoplasmic. A helical transmembrane segment spans residues 299–319 (AAYVRYLNSSAFFFSGFFVVF). Over 320–339 (LSVLPYALLKGIILRKIFTT) the chain is Extracellular. A helical membrane pass occupies residues 340-358 (ISFCIVLRMAVTRQFPWAV). Residues 359–858 (QTWYDSLGAI…YLRYITVHKS (500 aa)) are Cytoplasmic-facing. ATP is bound by residues Trp401, 457–464 (GSTGAGKT), and Gln492. Residues 423–645 (NGDNSLFFSN…RPDFSSKLMG (223 aa)) enclose the ABC transporter 1 domain. The S-palmitoyl cysteine moiety is linked to residue Cys523. Ser548 bears the Phosphoserine mark. The interval 653–831 (TAERRNSIIT…EEINEEDLRD (179 aa)) is disordered R region. A phosphoserine; by PKA mark is found at Ser659 and Ser669. Ser685 is modified (phosphoserine; by PKC). Lys687 participates in a covalent cross-link: Glycyl lysine isopeptide (Lys-Gly) (interchain with G-Cter in ubiquitin). Ser699 is subject to Phosphoserine; by PKA. Phosphoserine is present on Ser711. Position 716 is a phosphothreonine (Thr716). Ser736 and Ser767 each carry phosphoserine; by PKA. Residue Ser790 is modified to Phosphoserine; by PKC. Ser795 and Ser813 each carry phosphoserine; by PKA. A helical membrane pass occupies residues 859–879 (LMFVLIWCLVVFLVEVAASLV). Residues 859 to 1155 (LMFVLIWCLV…AVNSSIDVDS (297 aa)) enclose the ABC transmembrane type-1 2 domain. The Extracellular segment spans residues 880–918 (VLCLFPKIFFQDKGNSTKSANNSYAVIITSTSSYYIFYI). Residues Asn894 and Asn900 are each glycosylated (N-linked (GlcNAc...) asparagine). The discontinuously helical transmembrane segment at 919-939 (YVGVADTLLALGLFRGLPLVH) threads the bilayer. Residues 940-990 (TLITVSKTLHHKMLQSVLQAPMSTLNTLKTGGILNRFSKDIAVLDDLLPLT) lie on the Cytoplasmic side of the membrane. Residues 991–1011 (IFDFVQLLLIVIGAVVVVSVL) form a helical membrane-spanning segment. The Extracellular portion of the chain corresponds to 1012–1013 (QP). Residues 1014–1034 (YIFLATVPVIAAFILLRAYFL) form a helical membrane-spanning segment. The Cytoplasmic segment spans residues 1035–1095 (HTSQQLKQLE…TANWFLYLST (61 aa)). The chain crosses the membrane as a helical span at residues 1096 to 1116 (LRWFQMRIEMIFVIFFIAVTF). The Extracellular segment spans residues 1117-1130 (ISILTTGEGEGRVG). A helical transmembrane segment spans residues 1131–1151 (IILTLAMNIMGTLQWAVNSSI). At 1152–1481 (DVDSLMRSVS…TEEEVQETKL (330 aa)) the chain is on the cytoplasmic side. Residues 1211 to 1444 (MTVKDLTAKY…KSLFRQAISP (234 aa)) form the ABC transporter 2 domain. Residues Tyr1220 and 1245–1252 (GRTGSGKS) each bind ATP. The interaction with GORASP2 stretch occupies residues 1387–1481 (RTLKQAFANC…TEEEVQETKL (95 aa)). The S-palmitoyl cysteine moiety is linked to residue Cys1396. A disordered region spans residues 1453–1481 (HRNSSRQRSRSNIAALKEETEEEVQETKL). A Phosphoserine modification is found at Ser1457. Residues 1471–1481 (ETEEEVQETKL) are compositionally biased toward acidic residues. A PDZ-binding motif is present at residues 1479-1481 (TKL).

The protein belongs to the ABC transporter superfamily. ABCC family. CFTR transporter (TC 3.A.1.202) subfamily. In terms of assembly, monomer; does not require oligomerization for channel activity. May form oligomers in the membrane. Interacts with SLC26A3, SLC26A6 and NHERF1. Interacts with SHANK2. Interacts with MYO6. Interacts (via C-terminus) with GOPC (via PDZ domain); this promotes CFTR internalization and thereby decreases channel activity. Interacts with SLC4A7 through NHERF1. Found in a complex with MYO5B and RAB11A. Interacts with ANO1. Interacts with SLC26A8. Interacts with AHCYL1; the interaction increases CFTR activity. Interacts with CSE1L. The core-glycosylated form interacts with GORASP2 (via PDZ GRASP-type 1 domain) in respone to ER stress. Interacts with MARCHF2; the interaction leads to CFTR ubiqtuitination and degradation. Interacts with ADGRG2. N-glycosylated. In terms of processing, phosphorylated; cAMP treatment promotes phosphorylation and activates the channel. Dephosphorylation decreases the ATPase activity (in vitro). Phosphorylation at PKA sites activates the channel. Phosphorylation at PKC sites enhances the response to phosphorylation by PKA. Phosphorylated by AMPK; this inhibits channel activity. Post-translationally, ubiquitinated, leading to its degradation in the lysosome. Deubiquitination by USP10 in early endosomes enhances its endocytic recycling to the cell membrane. Ubiquitinated by RNF185 during ER stress. Ubiquitinated by MARCHF2.

It is found in the apical cell membrane. It localises to the early endosome membrane. The protein localises to the cell membrane. Its subcellular location is the recycling endosome membrane. The protein resides in the endoplasmic reticulum membrane. It is found in the nucleus. It catalyses the reaction ATP + H2O + closed Cl(-) channel = ADP + phosphate + open Cl(-) channel.. The catalysed reaction is chloride(in) = chloride(out). The enzyme catalyses hydrogencarbonate(in) = hydrogencarbonate(out). It carries out the reaction ATP + H2O = ADP + phosphate + H(+). Functionally, epithelial ion channel that plays an important role in the regulation of epithelial ion and water transport and fluid homeostasis. Mediates the transport of chloride ions across the cell membrane. Possesses an intrinsic ATPase activity and utilizes ATP to gate its channel; the passive flow of anions through the channel is gated by cycles of ATP binding and hydrolysis by the ATP-binding domains. The ion channel is also permeable to HCO(3)(-); selectivity depends on the extracellular chloride concentration. Exerts its function also by modulating the activity of other ion channels and transporters. Contributes to the regulation of the pH and the ion content of the epithelial fluid layer. Modulates the activity of the epithelial sodium channel (ENaC) complex, in part by regulating the cell surface expression of the ENaC complex. May regulate bicarbonate secretion and salvage in epithelial cells by regulating the transporter SLC4A7. Can inhibit the chloride channel activity of ANO1. Plays a role in the chloride and bicarbonate homeostasis during sperm epididymal maturation and capacitation. This chain is Cystic fibrosis transmembrane conductance regulator, found in Bos taurus (Bovine).